Consider the following 295-residue polypeptide: HTH-type transcriptional regulator TfdS (295 aa).

An HTH lysR-type domain is found at 1-58; it reads MEFRQLRYFVAAAEEGNVGAAARRLHISQPPVTRQIHALEQHLGVLLFERSARGVQLT. The segment at residues 18-37 is a DNA-binding region (H-T-H motif); that stretch reads VGAAARRLHISQPPVTRQIH.

The protein belongs to the LysR transcriptional regulatory family.

The protein resides in the cytoplasm. Involved in the regulation of 3-chlorocatechol degradation. Transcriptional regulator of tfdB expression. Acts as a repressor in the absence of its effector (either 2-cis-chlorodiene lactone or chloromaleylacetate) but acts as an activator when its effector is present. In Cupriavidus pinatubonensis (strain JMP 134 / LMG 1197) (Cupriavidus necator (strain JMP 134)), this protein is HTH-type transcriptional regulator TfdS (tfdS).